We begin with the raw amino-acid sequence, 159 residues long: 2-C-methyl-D-erythritol 2,4-cyclodiphosphate synthase (159 aa).

The a divalent metal cation site is built by aspartate 8 and histidine 10. 4-CDP-2-C-methyl-D-erythritol 2-phosphate is bound by residues 8 to 10 (DVH) and 34 to 35 (HS). Residue histidine 42 coordinates a divalent metal cation. Residues 56–58 (DIG), 61–65 (FPDTD), 100–106 (AQAPRML), 132–135 (TTTE), phenylalanine 139, and arginine 142 contribute to the 4-CDP-2-C-methyl-D-erythritol 2-phosphate site.

It belongs to the IspF family. Homotrimer. The cofactor is a divalent metal cation.

It carries out the reaction 4-CDP-2-C-methyl-D-erythritol 2-phosphate = 2-C-methyl-D-erythritol 2,4-cyclic diphosphate + CMP. It participates in isoprenoid biosynthesis; isopentenyl diphosphate biosynthesis via DXP pathway; isopentenyl diphosphate from 1-deoxy-D-xylulose 5-phosphate: step 4/6. Involved in the biosynthesis of isopentenyl diphosphate (IPP) and dimethylallyl diphosphate (DMAPP), two major building blocks of isoprenoid compounds. Catalyzes the conversion of 4-diphosphocytidyl-2-C-methyl-D-erythritol 2-phosphate (CDP-ME2P) to 2-C-methyl-D-erythritol 2,4-cyclodiphosphate (ME-CPP) with a corresponding release of cytidine 5-monophosphate (CMP). The polypeptide is 2-C-methyl-D-erythritol 2,4-cyclodiphosphate synthase (Escherichia coli O45:K1 (strain S88 / ExPEC)).